Reading from the N-terminus, the 255-residue chain is Indole-3-glycerol phosphate synthase (255 aa).

It belongs to the TrpC family.

It carries out the reaction 1-(2-carboxyphenylamino)-1-deoxy-D-ribulose 5-phosphate + H(+) = (1S,2R)-1-C-(indol-3-yl)glycerol 3-phosphate + CO2 + H2O. It participates in amino-acid biosynthesis; L-tryptophan biosynthesis; L-tryptophan from chorismate: step 4/5. The polypeptide is Indole-3-glycerol phosphate synthase (trpC) (Priestia megaterium (strain ATCC 12872 / QMB1551) (Bacillus megaterium)).